The following is a 430-amino-acid chain: Serine--tRNA ligase (430 aa).

L-serine is bound at residue 237–239; it reads TAE. An ATP-binding site is contributed by 268-270; that stretch reads RSE. Residue Glu-291 participates in L-serine binding. 355–358 contacts ATP; that stretch reads EISS. Ser-391 serves as a coordination point for L-serine.

This sequence belongs to the class-II aminoacyl-tRNA synthetase family. Type-1 seryl-tRNA synthetase subfamily. As to quaternary structure, homodimer. The tRNA molecule binds across the dimer.

It localises to the cytoplasm. The catalysed reaction is tRNA(Ser) + L-serine + ATP = L-seryl-tRNA(Ser) + AMP + diphosphate + H(+). The enzyme catalyses tRNA(Sec) + L-serine + ATP = L-seryl-tRNA(Sec) + AMP + diphosphate + H(+). The protein operates within aminoacyl-tRNA biosynthesis; selenocysteinyl-tRNA(Sec) biosynthesis; L-seryl-tRNA(Sec) from L-serine and tRNA(Sec): step 1/1. In terms of biological role, catalyzes the attachment of serine to tRNA(Ser). Is also able to aminoacylate tRNA(Sec) with serine, to form the misacylated tRNA L-seryl-tRNA(Sec), which will be further converted into selenocysteinyl-tRNA(Sec). The chain is Serine--tRNA ligase from Shigella dysenteriae serotype 1 (strain Sd197).